The primary structure comprises 135 residues: UPF0329 protein ECU07_1860/ECU10_0040/ECU11_2100 (135 aa).

The protein belongs to the UPF0329 family.

In Encephalitozoon cuniculi (strain GB-M1) (Microsporidian parasite), this protein is UPF0329 protein ECU07_1860/ECU10_0040/ECU11_2100.